A 550-amino-acid polypeptide reads, in one-letter code: Hydroxylamine reductase (550 aa).

[2Fe-2S] cluster contacts are provided by cysteine 3, cysteine 6, cysteine 18, and cysteine 25. The hybrid [4Fe-2O-2S] cluster site is built by histidine 249, glutamate 273, cysteine 317, cysteine 405, cysteine 433, cysteine 458, glutamate 492, and lysine 494. Residue cysteine 405 is modified to Cysteine persulfide.

It belongs to the HCP family. [2Fe-2S] cluster serves as cofactor. Requires hybrid [4Fe-2O-2S] cluster as cofactor.

The protein localises to the cytoplasm. The enzyme catalyses A + NH4(+) + H2O = hydroxylamine + AH2 + H(+). Its function is as follows. Catalyzes the reduction of hydroxylamine to form NH(3) and H(2)O. This chain is Hydroxylamine reductase, found in Pectobacterium carotovorum subsp. carotovorum (strain PC1).